The chain runs to 95 residues: MKINREQVEHVARLARLALSEDELASLTDDMDAILGYVEKLNELDTDHIIPTAHAVPVENAFREDCAGSSIGTDKALQNAPEASDNCFVVPKVIE.

This sequence belongs to the GatC family. As to quaternary structure, heterotrimer of A, B and C subunits.

It catalyses the reaction L-glutamyl-tRNA(Gln) + L-glutamine + ATP + H2O = L-glutaminyl-tRNA(Gln) + L-glutamate + ADP + phosphate + H(+). It carries out the reaction L-aspartyl-tRNA(Asn) + L-glutamine + ATP + H2O = L-asparaginyl-tRNA(Asn) + L-glutamate + ADP + phosphate + 2 H(+). Functionally, allows the formation of correctly charged Asn-tRNA(Asn) or Gln-tRNA(Gln) through the transamidation of misacylated Asp-tRNA(Asn) or Glu-tRNA(Gln) in organisms which lack either or both of asparaginyl-tRNA or glutaminyl-tRNA synthetases. The reaction takes place in the presence of glutamine and ATP through an activated phospho-Asp-tRNA(Asn) or phospho-Glu-tRNA(Gln). This Syntrophotalea carbinolica (strain DSM 2380 / NBRC 103641 / GraBd1) (Pelobacter carbinolicus) protein is Aspartyl/glutamyl-tRNA(Asn/Gln) amidotransferase subunit C.